A 94-amino-acid chain; its full sequence is Integration host factor subunit beta (94 aa).

This sequence belongs to the bacterial histone-like protein family. In terms of assembly, heterodimer of an alpha and a beta chain.

Its function is as follows. This protein is one of the two subunits of integration host factor, a specific DNA-binding protein that functions in genetic recombination as well as in transcriptional and translational control. This chain is Integration host factor subunit beta (ihfB), found in Haemophilus influenzae (strain ATCC 51907 / DSM 11121 / KW20 / Rd).